Consider the following 132-residue polypeptide: MRGNKAKIPRSINTGTYLECADNTGARTLFVVSVKKYRGVKNRQPCAGIGDMVVVSVKKGTPEMRKQIFNAVIIRQKKEFRRPDGLRVKFEDNAAVITDDAGVPKGSEIKGPVAREVAERFGKIASSAAIIV.

Belongs to the universal ribosomal protein uL14 family. As to quaternary structure, part of the 50S ribosomal subunit. Forms a cluster with proteins L3 and L24e, part of which may contact the 16S rRNA in 2 intersubunit bridges.

In terms of biological role, binds to 23S rRNA. Forms part of two intersubunit bridges in the 70S ribosome. The polypeptide is Large ribosomal subunit protein uL14 (Methanothrix thermoacetophila (strain DSM 6194 / JCM 14653 / NBRC 101360 / PT) (Methanosaeta thermophila)).